Reading from the N-terminus, the 143-residue chain is Transcriptional regulator MraZ (143 aa).

SpoVT-AbrB domains follow at residues 5 to 47 (THTP…PRAE) and 76 to 119 (TDEQ…DAQA).

This sequence belongs to the MraZ family. In terms of assembly, forms oligomers.

The protein localises to the cytoplasm. It localises to the nucleoid. In Mycobacterium leprae (strain Br4923), this protein is Transcriptional regulator MraZ.